We begin with the raw amino-acid sequence, 293 residues long: uncharacterized protein (293 aa).

Disordered regions lie at residues 20–148 and 226–283; these read ELHS…NNNT and RENQ…GNKN. Acidic residues-rich tracts occupy residues 37 to 47, 56 to 91, and 99 to 112; these read LEDDEEYDDDQ, EEFD…DDEM, and NIDD…EEEQ. Low complexity-rich tracts occupy residues 117 to 148 and 232 to 283; these read TNNN…NNNT and NSNS…GNKN.

This is an uncharacterized protein from Dictyostelium discoideum (Social amoeba).